A 473-amino-acid chain; its full sequence is Probable glycine dehydrogenase (decarboxylating) subunit 2 (473 aa).

Residue K266 is modified to N6-(pyridoxal phosphate)lysine.

The protein belongs to the GcvP family. C-terminal subunit subfamily. As to quaternary structure, the glycine cleavage system is composed of four proteins: P, T, L and H. In this organism, the P 'protein' is a heterodimer of two subunits. Pyridoxal 5'-phosphate is required as a cofactor.

It carries out the reaction N(6)-[(R)-lipoyl]-L-lysyl-[glycine-cleavage complex H protein] + glycine + H(+) = N(6)-[(R)-S(8)-aminomethyldihydrolipoyl]-L-lysyl-[glycine-cleavage complex H protein] + CO2. In terms of biological role, the glycine cleavage system catalyzes the degradation of glycine. The P protein binds the alpha-amino group of glycine through its pyridoxal phosphate cofactor; CO(2) is released and the remaining methylamine moiety is then transferred to the lipoamide cofactor of the H protein. The chain is Probable glycine dehydrogenase (decarboxylating) subunit 2 from Thermus thermophilus (strain ATCC BAA-163 / DSM 7039 / HB27).